A 1132-amino-acid chain; its full sequence is Tyrosine-protein kinase JAK2 (1132 aa).

The segment at 1-239 is interaction with cytokine/interferon/growth hormone receptors; the sequence is MGMACLTMTE…RYRFRRFIQQ (239 aa). Residues 37-380 enclose the FERM domain; that stretch reads PVLQVYLYHS…GYYRLTADAH (344 aa). At tyrosine 119 the chain carries Phosphotyrosine; by autocatalysis. Phosphotyrosine is present on residues tyrosine 372 and tyrosine 373. The SH2; atypical domain occupies 401–482; the sequence is HGPISMDFAI…NLKDLLNCYQ (82 aa). Serine 523 bears the Phosphoserine mark. One can recognise a Protein kinase 1 domain in the interval 545-809; that stretch reads LIFNESLGQG…AVIRDLNSLF (265 aa). Phosphotyrosine occurs at positions 570 and 813. In terms of domain architecture, Protein kinase 2 spans 849-1124; it reads LKFLQQLGKG…SFRDLSLRVD (276 aa). 855–863 lines the ATP pocket; that stretch reads LGKGNFGSV. Tyrosine 868 is subject to Phosphotyrosine; by autocatalysis. Lysine 882 lines the ATP pocket. Tyrosine 966 and tyrosine 972 each carry phosphotyrosine; by autocatalysis. The active-site Proton acceptor is aspartate 976. Tyrosine 1007 and tyrosine 1008 each carry phosphotyrosine; by autocatalysis.

The protein belongs to the protein kinase superfamily. Tyr protein kinase family. JAK subfamily. Interacts with IL23R, SKB1 and STAM2. Interacts with EPOR. Interacts with LYN. Interacts with SIRPA. Interacts with SH2B1. Interacts with TEC. Interacts with IFNGR2 (via intracellular domain). Interacts with LEPR (Isoform B). Interacts with HSP90AB1; promotes functional activation in a heat shock-dependent manner. Interacts with STRA6. Interacts with ASB2; the interaction targets JAK2 for Notch-induced proteasomal degradation. Interacts with MPL/TPOR. It depends on Mg(2+) as a cofactor. Autophosphorylated, leading to regulate its activity. Leptin promotes phosphorylation on tyrosine residues, including phosphorylation on Tyr-813. Autophosphorylation on Tyr-119 in response to EPO down-regulates its kinase activity. Autophosphorylation on Tyr-868, Tyr-966 and Tyr-972 in response to growth hormone (GH) are required for maximal kinase activity. Also phosphorylated by TEC. Phosphorylated on tyrosine residues in response to interferon gamma signaling. Phosphorylated on tyrosine residues in response to a signaling cascade that is activated by increased cellular retinol. In terms of processing, undergoes Notch-induced ubiquitination and subsequent proteasomal degradation which is mediated by ASB1 or ASB2, the substrate-recognition components of probable ECS E3 ubiquitin-protein ligase complexes. As to expression, ubiquitously expressed throughout most tissues.

The protein resides in the endomembrane system. The protein localises to the cytoplasm. It is found in the nucleus. The catalysed reaction is L-tyrosyl-[protein] + ATP = O-phospho-L-tyrosyl-[protein] + ADP + H(+). Regulated by autophosphorylation, can both activate or decrease activity. Heme regulates its activity by enhancing the phosphorylation on Tyr-1007 and Tyr-1008. Functionally, non-receptor tyrosine kinase involved in various processes such as cell growth, development, differentiation or histone modifications. Mediates essential signaling events in both innate and adaptive immunity. In the cytoplasm, plays a pivotal role in signal transduction via its association with type I receptors such as growth hormone (GHR), prolactin (PRLR), leptin (LEPR), erythropoietin (EPOR), thrombopoietin receptor (MPL/TPOR); or type II receptors including IFN-alpha, IFN-beta, IFN-gamma and multiple interleukins. Following ligand-binding to cell surface receptors, phosphorylates specific tyrosine residues on the cytoplasmic tails of the receptor, creating docking sites for STATs proteins. Subsequently, phosphorylates the STATs proteins once they are recruited to the receptor. Phosphorylated STATs then form homodimer or heterodimers and translocate to the nucleus to activate gene transcription. For example, cell stimulation with erythropoietin (EPO) during erythropoiesis leads to JAK2 autophosphorylation, activation, and its association with erythropoietin receptor (EPOR) that becomes phosphorylated in its cytoplasmic domain. Then, STAT5 (STAT5A or STAT5B) is recruited, phosphorylated and activated by JAK2. Once activated, dimerized STAT5 translocates into the nucleus and promotes the transcription of several essential genes involved in the modulation of erythropoiesis. Part of a signaling cascade that is activated by increased cellular retinol and that leads to the activation of STAT5 (STAT5A or STAT5B). In addition, JAK2 mediates angiotensin-2-induced ARHGEF1 phosphorylation. Plays a role in cell cycle by phosphorylating CDKN1B. Cooperates with TEC through reciprocal phosphorylation to mediate cytokine-driven activation of FOS transcription. In the nucleus, plays a key role in chromatin by specifically mediating phosphorylation of 'Tyr-41' of histone H3 (H3Y41ph), a specific tag that promotes exclusion of CBX5 (HP1 alpha) from chromatin. Up-regulates the potassium voltage-gated channel activity of KCNA3. In Mus musculus (Mouse), this protein is Tyrosine-protein kinase JAK2.